Here is a 382-residue protein sequence, read N- to C-terminus: Homeobox protein bagpipe (382 aa).

Disordered regions lie at residues 27–66 (NDIL…SKSP), 144–178 (TSND…KKRS), and 314–382 (QPIP…VEID). Basic and acidic residues predominate over residues 48 to 62 (EPEKLKPSSDRERSI). The span at 158–170 (SSPSESPLSHDGS) shows a compositional bias: low complexity. Positions 175 to 234 (KKRSRAAFSHAQVFELERRFAQQRYLSGPERSEMAKSLRLTETQVKIWFQNRRYKTKRKQ) form a DNA-binding region, homeobox. Positions 321-335 (QSSSFVTASSASSSP) are enriched in low complexity. Residues 373–382 (EDVDENVEID) are compositionally biased toward acidic residues.

This sequence belongs to the NK-3 homeobox family. As to expression, is expressed in a segmented pattern in visceral muscle and in a subset of cardiac muscles. Loss of activity results in segmental gaps in midgut visceral muscle.

It is found in the nucleus. Involved in the determination of cell fates in the dorsal mesoderm. This Drosophila melanogaster (Fruit fly) protein is Homeobox protein bagpipe (bap).